Consider the following 1226-residue polypeptide: Double-stranded RNA-specific adenosine deaminase (1226 aa).

The residue at position 26 (Arg26) is an Asymmetric dimethylarginine. The region spanning 133–199 (LSIYQDQEQR…GTPPLWKIAV (67 aa)) is the Z-binding 1 domain. The segment at 133–202 (LSIYQDQEQR…PLWKIAVSTQ (70 aa)) is interaction with Z-DNA. Disordered stretches follow at residues 208-238 (SGVVRPDGHSQGAPNSDPSLEPEDRNSTSVS) and 258-286 (GVVRPDSHSQGSPNSDPGLEPEDSNSTSA). Ser285 carries the post-translational modification Phosphoserine. The Z-binding 2 domain maps to 293-357 (FLDMAEIKEK…TTPPIWHLTD (65 aa)). Glycyl lysine isopeptide (Lys-Gly) (interchain with G-Cter in SUMO2) cross-links involve residues Lys384 and Lys408. A Glycyl lysine isopeptide (Lys-Gly) (interchain with G-Cter in SUMO); alternate cross-link involves residue Lys418. A Glycyl lysine isopeptide (Lys-Gly) (interchain with G-Cter in SUMO1); alternate cross-link involves residue Lys418. A Glycyl lysine isopeptide (Lys-Gly) (interchain with G-Cter in SUMO2); alternate cross-link involves residue Lys418. The residue at position 481 (Ser481) is a Phosphoserine. The region spanning 503 to 571 (NPISGLLEYA…AMKAMTILLE (69 aa)) is the DRBM 1 domain. The segment covering 574 to 597 (KAKDSGKSEESSHYSTEKESEKTA) has biased composition (basic and acidic residues). The interval 574–610 (KAKDSGKSEESSHYSTEKESEKTAESQTPTPSATSFF) is disordered. Lys580 is covalently cross-linked (Glycyl lysine isopeptide (Lys-Gly) (interchain with G-Cter in SUMO2)). Positions 600-610 (QTPTPSATSFF) are enriched in polar residues. Phosphothreonine occurs at positions 601 and 603. 3 positions are modified to phosphoserine: Ser614, Ser629, and Ser636. Positions 614-682 (SPVTTLLECM…AEEAMKALHG (69 aa)) constitute a DRBM 2 domain. Residues 716 to 725 (IGELVRYLNT) form an N-terminal extension of DRBM 3 and constituent of a bi-partite nuclear localization signal region. In terms of domain architecture, DRBM 3 spans 726-794 (NPVGGLLEYA…ADAALRVLIG (69 aa)). Residues 795-801 (ENEKAER) form a C-terminal extension of DRBM 3 and constituent of a bi-partite nuclear localization signal region. Thr808 is subject to Phosphothreonine. A phosphoserine mark is found at Ser814, Ser823, and Ser825. Lys875 participates in a covalent cross-link: Glycyl lysine isopeptide (Lys-Gly) (interchain with G-Cter in SUMO2). Positions 886 to 1221 (SLGTGNRCVK…ISKPQEEKNF (336 aa)) constitute an A to I editase domain. A Zn(2+)-binding site is contributed by His910. Glu912 functions as the Proton donor in the catalytic mechanism. Cys966 and Cys1036 together coordinate Zn(2+).

Homodimer. Homodimerization is essential for its catalytic activity. Isoform 5 can form heterodimers with ADARB1/ADAR2. Isoform 1 interacts with ILF2/NF45 and ILF3/NF90. Binding to ILF3/NF90 up-regulates ILF3-mediated gene expression. Isoform 1 and isoform 5 (via DRBM 3 domain) interact with TNPO1. Isoform 5 (via DRBM domains) interacts with XPO5. Isoform 1 and isoform 5 can interact with EIF2AK2/PKR and UPF1. Post-translationally, sumoylation reduces RNA-editing activity. Ubiquitously expressed, highest levels were found in brain and lung. Isoform 5 is expressed at higher levels in astrocytomas as compared to normal brain tissue and expression increases strikingly with the severity of the tumor, being higher in the most aggressive tumors.

The protein resides in the cytoplasm. The protein localises to the nucleus. It is found in the nucleolus. It carries out the reaction adenosine in double-stranded RNA + H2O + H(+) = inosine in double-stranded RNA + NH4(+). Catalyzes the hydrolytic deamination of adenosine to inosine in double-stranded RNA (dsRNA) referred to as A-to-I RNA editing. This may affect gene expression and function in a number of ways that include mRNA translation by changing codons and hence the amino acid sequence of proteins since the translational machinery read the inosine as a guanosine; pre-mRNA splicing by altering splice site recognition sequences; RNA stability by changing sequences involved in nuclease recognition; genetic stability in the case of RNA virus genomes by changing sequences during viral RNA replication; and RNA structure-dependent activities such as microRNA production or targeting or protein-RNA interactions. Can edit both viral and cellular RNAs and can edit RNAs at multiple sites (hyper-editing) or at specific sites (site-specific editing). Its cellular RNA substrates include: bladder cancer-associated protein (BLCAP), neurotransmitter receptors for glutamate (GRIA2) and serotonin (HTR2C) and GABA receptor (GABRA3). Site-specific RNA editing of transcripts encoding these proteins results in amino acid substitutions which consequently alters their functional activities. Exhibits low-level editing at the GRIA2 Q/R site, but edits efficiently at the R/G site and HOTSPOT1. Its viral RNA substrates include: hepatitis C virus (HCV), vesicular stomatitis virus (VSV), measles virus (MV), hepatitis delta virus (HDV), and human immunodeficiency virus type 1 (HIV-1). Exhibits either a proviral (HDV, MV, VSV and HIV-1) or an antiviral effect (HCV) and this can be editing-dependent (HDV and HCV), editing-independent (VSV and MV) or both (HIV-1). Impairs HCV replication via RNA editing at multiple sites. Enhances the replication of MV, VSV and HIV-1 through an editing-independent mechanism via suppression of EIF2AK2/PKR activation and function. Stimulates both the release and infectivity of HIV-1 viral particles by an editing-dependent mechanism where it associates with viral RNAs and edits adenosines in the 5'UTR and the Rev and Tat coding sequence. Can enhance viral replication of HDV via A-to-I editing at a site designated as amber/W, thereby changing an UAG amber stop codon to an UIG tryptophan (W) codon that permits synthesis of the large delta antigen (L-HDAg) which has a key role in the assembly of viral particles. However, high levels of ADAR1 inhibit HDV replication. The protein is Double-stranded RNA-specific adenosine deaminase (ADAR) of Homo sapiens (Human).